Here is a 243-residue protein sequence, read N- to C-terminus: Probable transcriptional regulatory protein Tbd_2215 (243 aa).

The protein belongs to the TACO1 family.

The protein resides in the cytoplasm. The chain is Probable transcriptional regulatory protein Tbd_2215 from Thiobacillus denitrificans (strain ATCC 25259 / T1).